Reading from the N-terminus, the 338-residue chain is RNA 3'-terminal phosphate cyclase (338 aa).

ATP contacts are provided by residues glutamine 103 and 283–287 (YLADQ). Catalysis depends on histidine 308, which acts as the Tele-AMP-histidine intermediate.

Belongs to the RNA 3'-terminal cyclase family. Type 1 subfamily.

Its subcellular location is the cytoplasm. The enzyme catalyses a 3'-end 3'-phospho-ribonucleotide-RNA + ATP = a 3'-end 2',3'-cyclophospho-ribonucleotide-RNA + AMP + diphosphate. In terms of biological role, catalyzes the conversion of 3'-phosphate to a 2',3'-cyclic phosphodiester at the end of RNA. The mechanism of action of the enzyme occurs in 3 steps: (A) adenylation of the enzyme by ATP; (B) transfer of adenylate to an RNA-N3'P to produce RNA-N3'PP5'A; (C) and attack of the adjacent 2'-hydroxyl on the 3'-phosphorus in the diester linkage to produce the cyclic end product. The biological role of this enzyme is unknown but it is likely to function in some aspects of cellular RNA processing. The protein is RNA 3'-terminal phosphate cyclase of Escherichia coli O6:K15:H31 (strain 536 / UPEC).